We begin with the raw amino-acid sequence, 350 residues long: UDP-glucose 4-epimerase GEPI48 (350 aa).

5–36 (TVLVTGGAGYIGSHTVLQLLLGGFKAVVVDNL) serves as a coordination point for NAD(+). S130 is a binding site for substrate. The active-site Proton acceptor is Y154.

It belongs to the NAD(P)-dependent epimerase/dehydratase family. Requires NAD(+) as cofactor.

The catalysed reaction is UDP-alpha-D-glucose = UDP-alpha-D-galactose. Its pathway is carbohydrate metabolism; galactose metabolism. The sequence is that of UDP-glucose 4-epimerase GEPI48 from Cyamopsis tetragonoloba (Guar).